Consider the following 132-residue polypeptide: Small ribosomal subunit protein uS8 (132 aa).

Belongs to the universal ribosomal protein uS8 family. As to quaternary structure, part of the 30S ribosomal subunit. Contacts proteins S5 and S12.

Functionally, one of the primary rRNA binding proteins, it binds directly to 16S rRNA central domain where it helps coordinate assembly of the platform of the 30S subunit. This Rhodopseudomonas palustris (strain BisB18) protein is Small ribosomal subunit protein uS8.